Here is a 103-residue protein sequence, read N- to C-terminus: c-Myc-binding protein (103 aa).

Belongs to the AMY1 family. Binds via its C-terminal region to the N-terminal region of MYC. Associates with AKAP1/S-AKAP84. Interacts with MYCBPAP. Interacts with CFAP91.

The protein localises to the cytoplasm. It localises to the nucleus. Its function is as follows. May control the transcriptional activity of MYC. Stimulates the activation of E box-dependent transcription by MYC. The polypeptide is c-Myc-binding protein (MYCBP) (Bos taurus (Bovine)).